Reading from the N-terminus, the 115-residue chain is MNLPLALTTSITLTLLLVTIAFWLPQLNVYTEKYSPYECGFDPMGSARLPFSMKFFLVAITFLLFDLEIALLLPLPWASQTNNLKLMLTVALVLITILAAGLAYEWLQKGLEWVE.

Helical transmembrane passes span 3 to 23 (LPLALTTSITLTLLLVTIAFW), 55 to 75 (FFLVAITFLLFDLEIALLLPL), and 86 to 106 (LMLTVALVLITILAAGLAYEW).

Belongs to the complex I subunit 3 family. As to quaternary structure, core subunit of respiratory chain NADH dehydrogenase (Complex I) which is composed of 45 different subunits. Interacts with TMEM186. Interacts with TMEM242.

Its subcellular location is the mitochondrion inner membrane. It carries out the reaction a ubiquinone + NADH + 5 H(+)(in) = a ubiquinol + NAD(+) + 4 H(+)(out). Functionally, core subunit of the mitochondrial membrane respiratory chain NADH dehydrogenase (Complex I) which catalyzes electron transfer from NADH through the respiratory chain, using ubiquinone as an electron acceptor. Essential for the catalytic activity of complex I. This chain is NADH-ubiquinone oxidoreductase chain 3, found in Lemur catta (Ring-tailed lemur).